The primary structure comprises 263 residues: Norsolorinic acid ketoreductase stcE (263 aa).

NADP(+)-binding residues include Leu-29, Asp-76, Asn-105, Tyr-177, Lys-181, Ile-208, and Ser-210. The Proton donor role is filled by Tyr-177. The active-site Lowers pKa of active site Tyr is the Lys-181.

This sequence belongs to the short-chain dehydrogenases/reductases (SDR) family.

It catalyses the reaction (1'S)-averantin + NADP(+) = norsolorinic acid + NADPH + H(+). It participates in mycotoxin biosynthesis; sterigmatocystin biosynthesis. In terms of biological role, short chain dehydrogenase; part of the gene cluster that mediates the biosynthesis of sterigmatocystin (ST), a polyketide-derived furanocoumarin which is part of the most toxic and carcinogenic compounds among the known mycotoxins. The first step in the biosynthesis of sterigmatocystin is the production of hexanoate by the fatty acid synthase (FAS) units stcJ and stcK. The polyketide backbone is assembled by the non-reducing polyketide synthase stcA by condensation of the starter hexanoyl-CoA and 7 malonyl-CoA extender units followed by cyclization and release of norsolorinic acid. Norsolorinic acid is the first stable intermediate in the biosynthesis of sterigmatocystin and is converted into averantin (AVN) by the ketoreductase stcE which reduces the hexanoate ketone to an alcohol. Averantin is then oxidized into 5'-hydroxyaverantin (HAVN) by the cytochrome P450 monooxygenase stcF. 5'-hydroxyaverantin is further converted to 5'-oxyaverantin (OAVN) by the 5'-hydroxyaverantin dehydrogenase stcG. The next step is the conversion of OAVN into averufin (AVF) which is catalyzed by a yet to be identified enzyme. The cytochrome P450 monooxygenase stcB and the flavin-binding monooxygenase stcW are both required for the conversion of averufin to 1-hydroxyversicolorone. The esterase stcI probably catalyzes the formation of versiconal hemiacetal acetate from 1-hydroxyversicolorone. The oxydoreductase stcN then probably catalyzes the biosynthetic step from versiconal to versicolorin B (VERB). The next step is performed by the versicolorin B desaturase stcL to produce versicolorin A (VERA). The ketoreductase stcU and the cytochrome P450 monooxygenase stcS are involved in the conversion of versicolorin A to demethylsterigmatocystin. The Baeyer-Villiger oxidas stcQ and the reductase stcR might be involved in the biosynthetic step from versicolorin A to demethylsterigmatocystin. The final step in the biosynthesis of sterigmatocystin is the methylation of demethylsterigmatocystin catalyzed by the methyltransferase stcP. The sequence is that of Norsolorinic acid ketoreductase stcE from Emericella nidulans (strain FGSC A4 / ATCC 38163 / CBS 112.46 / NRRL 194 / M139) (Aspergillus nidulans).